We begin with the raw amino-acid sequence, 339 residues long: Malate dehydrogenase 3, cytoplasmic (339 aa).

NAD(+) contacts are provided by residues 22–23 (NI), Asp-49, and Gly-96. An oxaloacetate-binding site is contributed by Arg-105. NAD(+)-binding residues include Gln-119 and Asn-138. Oxaloacetate-binding residues include Asn-138, Arg-169, His-194, and Ser-249. Catalysis depends on His-194, which acts as the Proton acceptor.

The protein belongs to the LDH/MDH superfamily. MDH type 2 family. In terms of tissue distribution, expressed in rosette leaves at low levels.

The protein resides in the cytoplasm. It carries out the reaction (S)-malate + NAD(+) = oxaloacetate + NADH + H(+). Its function is as follows. Catalyzes a reversible NAD-dependent dehydrogenase reaction involved in central metabolism and redox homeostasis between organelle compartments. This chain is Malate dehydrogenase 3, cytoplasmic, found in Arabidopsis thaliana (Mouse-ear cress).